We begin with the raw amino-acid sequence, 533 residues long: DEAD-box ATP-dependent RNA helicase CshA (533 aa).

Residues 2–30 (TTFRELGLSDSLLQSVESMGFEEATPIQA) carry the Q motif motif. The region spanning 33–203 (IPHALQGKDI…ERFMTEPQHI (171 aa)) is the Helicase ATP-binding domain. Residue 46–53 (AQTGTGKT) coordinates ATP. The DEAD box motif lies at 151–154 (DEAD). A Helicase C-terminal domain is found at 214-374 (NIQQFYLEVQ…RMDAPTLDEA (161 aa)). A disordered region spans residues 428-533 (TTPIALTSEP…ERKHHSRPQA (106 aa)). Positions 458–512 (DGNRNRSRDGRGGGDGRNRDRNRDGRNRDGNRDRNRDGNRDRNRDGGSRGRRGEG) are enriched in basic and acidic residues. Positions 524 to 533 (ERKHHSRPQA) are enriched in basic residues.

Belongs to the DEAD box helicase family. CshA subfamily. Oligomerizes, may be a member of the RNA degradosome.

The protein localises to the cytoplasm. It catalyses the reaction ATP + H2O = ADP + phosphate + H(+). Functionally, DEAD-box RNA helicase possibly involved in RNA degradation. May work in conjunction with the cold shock proteins to ensure proper initiation of transcription at low and optimal temperatures. Unwinds dsRNA in both 5'- and 3'-directions and shows RNA-dependent ATPase activity. Probably has a somewhat redundant function with cshB, as cshA can partially complement the growth effects of a cshB deletion. Plays a role in adaptation to cold, oxididant and pH stress. This Bacillus cereus (strain ATCC 14579 / DSM 31 / CCUG 7414 / JCM 2152 / NBRC 15305 / NCIMB 9373 / NCTC 2599 / NRRL B-3711) protein is DEAD-box ATP-dependent RNA helicase CshA.